Here is a 576-residue protein sequence, read N- to C-terminus: Lysine--tRNA ligase (576 aa).

2 residues coordinate Mg(2+): glutamate 412 and glutamate 419.

It belongs to the class-II aminoacyl-tRNA synthetase family. Homodimer. The cofactor is Mg(2+).

The protein localises to the cytoplasm. The enzyme catalyses tRNA(Lys) + L-lysine + ATP = L-lysyl-tRNA(Lys) + AMP + diphosphate. This Parabacteroides distasonis (strain ATCC 8503 / DSM 20701 / CIP 104284 / JCM 5825 / NCTC 11152) protein is Lysine--tRNA ligase.